The primary structure comprises 622 residues: MLQGILETVPSDLKDPISLWFKQDRNPKTIEEVTALCKKSDWNELHKRFDSRIQFGTAGLRSQMQAGFSRMNTLVVIQASQGLATYVRQQFPDNLVAVVGHDHRFHSKEFARATAAAFLLKGFKVHYLNPDHEFVHTPLVPFAVDKLKASVGVMITASHNPKMDNGYKVYYSNGCQIIPPHDHAISDSIDANLEPWANVWDFDDVLNKALKQGKLMYSREEMLKLYLEEVSKNLVEINPLKLEVKAKPWFVYTPMHGVGFDIFSTIVKKTLCLVEGKDYLCVPEQQNPDPSFPTVGFPNPEEKGALDIGINLAEKHDIDLLVANDPDADRFSVAVKDMQSGEWRQLTGNEIGFLFAFYEYQKYKSMDKEFQHVHPLAMLNSTVSSQMIKKMAEIEGFHYEDTLTGFKWIGNRAILLEKKGYYVPFGFEEAIGYMFPAMEHDKDGISASIVFLQAYCKWKIDHNLDPLNVLENGFKKYGVFKEYNGYYVVPNPTVTKDIFDYIRNVYTPEGASYPSSIGEEIEVLYYRDLTTGYQSDTINHKPTLPVDPTSQMITVSARPSNGSENEHIRFTIRGSGTEPKLKVYIEACANEEQRASFLAKLTWNVLRREWFRPDEMNIVTKF.

Substrate-binding positions include Thr-57, Arg-61, 158 to 159 (SH), and Lys-168. Ser-158 functions as the Phosphoserine intermediate in the catalytic mechanism. A Mg(2+)-binding site is contributed by Ser-158. At Ser-158 the chain carries Phosphoserine. Residues Asp-325, Asp-327, and Asp-329 each contribute to the Mg(2+) site. Substrate is bound by residues 329 to 330 (DR), Thr-404, 428 to 430 (EEA), and Lys-442.

It belongs to the phosphohexose mutase family. Mg(2+) serves as cofactor.

It is found in the cytoplasm. The protein localises to the nucleus. It carries out the reaction alpha-D-ribose 1-phosphate = D-ribose 5-phosphate. In terms of biological role, major phosphoribomutase that converts ribose 1-phosphate to ribose 5-phosphate. Involved in ribose salvage via the pentose phosphate pathway. This chain is Phosphoribomutase, found in Saccharomyces cerevisiae (strain ATCC 204508 / S288c) (Baker's yeast).